The sequence spans 282 residues: Putative 4-diphosphocytidyl-2-C-methyl-D-erythritol kinase (282 aa).

Lysine 9 is an active-site residue. Residue 93-103 participates in ATP binding; the sequence is PVSAGLAGGSA. Aspartate 135 is an active-site residue.

It belongs to the GHMP kinase family. IspE subfamily.

The catalysed reaction is 4-CDP-2-C-methyl-D-erythritol + ATP = 4-CDP-2-C-methyl-D-erythritol 2-phosphate + ADP + H(+). Functionally, catalyzes the phosphorylation of the position 2 hydroxy group of 4-diphosphocytidyl-2C-methyl-D-erythritol. The chain is Putative 4-diphosphocytidyl-2-C-methyl-D-erythritol kinase from Staphylococcus haemolyticus (strain JCSC1435).